The chain runs to 149 residues: Transcriptional repressor NrdR (149 aa).

A zinc finger lies at Cys-3–Cys-34. Residues Pro-49–Glu-139 enclose the ATP-cone domain.

The protein belongs to the NrdR family. Requires Zn(2+) as cofactor.

In terms of biological role, negatively regulates transcription of bacterial ribonucleotide reductase nrd genes and operons by binding to NrdR-boxes. This is Transcriptional repressor NrdR from Vibrio vulnificus (strain YJ016).